Here is a 669-residue protein sequence, read N- to C-terminus: Probable pectinesterase/pectinesterase inhibitor 21 (669 aa).

The helical transmembrane segment at 16-36 threads the bilayer; the sequence is IVITISSVLLISMVVAVTVGV. N-linked (GlcNAc...) asparagine glycosylation is found at asparagine 52, asparagine 81, asparagine 94, asparagine 281, and asparagine 300. The segment at 52 to 205 is pectinesterase inhibitor 21; sequence NASVKAVKDV…IELTHNGLAI (154 aa). Positions 255 to 551 are pectinesterase 21; that stretch reads DIVVAQDGSG…FTPAQYIQGD (297 aa). Substrate is bound by residues threonine 330 and glutamine 360. Aspartate 383 serves as the catalytic Proton donor; for pectinesterase activity. Cysteines 397 and 417 form a disulfide. Aspartate 404 (nucleophile; for pectinesterase activity) is an active-site residue. A glycan (N-linked (GlcNAc...) asparagine) is linked at asparagine 416. Arginine 472 and tryptophan 474 together coordinate substrate. Positions 615–669 are disordered; it reads AYTGTASPESSIKVSSSTETASPESSFTEASTASPESSIMVASTESSGSFFSMFT. Positions 616–628 are enriched in polar residues; sequence YTGTASPESSIKV. Residues 629–652 are compositionally biased toward low complexity; the sequence is SSSTETASPESSFTEASTASPESS. Polar residues predominate over residues 654-669; it reads MVASTESSGSFFSMFT.

The protein in the N-terminal section; belongs to the PMEI family. This sequence in the C-terminal section; belongs to the pectinesterase family. As to expression, expressed in flower buds.

The protein resides in the membrane. It catalyses the reaction [(1-&gt;4)-alpha-D-galacturonosyl methyl ester](n) + n H2O = [(1-&gt;4)-alpha-D-galacturonosyl](n) + n methanol + n H(+). Its pathway is glycan metabolism; pectin degradation; 2-dehydro-3-deoxy-D-gluconate from pectin: step 1/5. Its function is as follows. Acts in the modification of cell walls via demethylesterification of cell wall pectin. The sequence is that of Probable pectinesterase/pectinesterase inhibitor 21 (PME21) from Arabidopsis thaliana (Mouse-ear cress).